The following is a 243-amino-acid chain: 1-(5-phosphoribosyl)-5-[(5-phosphoribosylamino)methylideneamino] imidazole-4-carboxamide isomerase (243 aa).

The Proton acceptor role is filled by D8. The active-site Proton donor is the D130.

Belongs to the HisA/HisF family.

The protein localises to the cytoplasm. The enzyme catalyses 1-(5-phospho-beta-D-ribosyl)-5-[(5-phospho-beta-D-ribosylamino)methylideneamino]imidazole-4-carboxamide = 5-[(5-phospho-1-deoxy-D-ribulos-1-ylimino)methylamino]-1-(5-phospho-beta-D-ribosyl)imidazole-4-carboxamide. It functions in the pathway amino-acid biosynthesis; L-histidine biosynthesis; L-histidine from 5-phospho-alpha-D-ribose 1-diphosphate: step 4/9. This chain is 1-(5-phosphoribosyl)-5-[(5-phosphoribosylamino)methylideneamino] imidazole-4-carboxamide isomerase, found in Saccharophagus degradans (strain 2-40 / ATCC 43961 / DSM 17024).